Here is a 210-residue protein sequence, read N- to C-terminus: Aminoglycoside 2'-N-acetyltransferase (210 aa).

In terms of domain architecture, N-acetyltransferase spans 21 to 189; sequence IHTSDLDQET…SLFVLPVDLP (169 aa). Residues D54 and 106 to 107 each bind substrate; that span reads EA. CoA contacts are provided by residues 108–110 and 115–120; these read VAV and RGDGLG. Residues S141 and 176–177 contribute to the substrate site; that span reads ED.

Belongs to the AAC(2')-I acetyltransferase family. In terms of assembly, homodimer.

Functionally, catalyzes the coenzyme A-dependent acetylation of the 2' hydroxyl or amino group of a broad spectrum of aminoglycosides. It confers resistance to aminoglycosides. In Mycolicibacterium smegmatis (strain ATCC 700084 / mc(2)155) (Mycobacterium smegmatis), this protein is Aminoglycoside 2'-N-acetyltransferase (aac).